The following is a 43-amino-acid chain: uncharacterized protein (43 aa).

Residues 21 to 41 (SSFALIVVLFILLIIVGAAIF) form a helical membrane-spanning segment.

Belongs to the SscA family.

The protein localises to the membrane. This is an uncharacterized protein from Bacillus subtilis (strain 168).